Consider the following 572-residue polypeptide: Moesin/ezrin/radixin homolog 1 (572 aa).

In terms of domain architecture, FERM spans 1–291 (MNVRVTTMDA…GNHELYMRRR (291 aa)). Positions 456–491 (TTTPSHHHVEEEEEMDNEEELVNGENGNQDFSKDFD) are disordered. The segment covering 466 to 477 (EEEEMDNEEELV) has biased composition (acidic residues). At threonine 553 the chain carries Phosphothreonine.

Interacts with cytoskeletal actin.

The protein resides in the cell junction. It is found in the adherens junction. It localises to the cell projection. The protein localises to the microvillus. Its subcellular location is the rhabdomere. The protein resides in the cell membrane. It is found in the cytoplasm. It localises to the cytoskeleton. Functionally, involved in connections of major cytoskeletal structures to the plasma membrane. The polypeptide is Moesin/ezrin/radixin homolog 1 (Culex quinquefasciatus (Southern house mosquito)).